The chain runs to 128 residues: Sulfurtransferase TusD (128 aa).

The active-site Cysteine persulfide intermediate is Cys-78.

It belongs to the DsrE/TusD family. In terms of assembly, heterohexamer, formed by a dimer of trimers. The hexameric TusBCD complex contains 2 copies each of TusB, TusC and TusD. The TusBCD complex interacts with TusE.

It localises to the cytoplasm. In terms of biological role, part of a sulfur-relay system required for 2-thiolation of 5-methylaminomethyl-2-thiouridine (mnm(5)s(2)U) at tRNA wobble positions. Accepts sulfur from TusA and transfers it in turn to TusE. In Citrobacter koseri (strain ATCC BAA-895 / CDC 4225-83 / SGSC4696), this protein is Sulfurtransferase TusD.